The primary structure comprises 142 residues: Mini-ribonuclease 3 (142 aa).

Residue Asp33 is part of the active site.

This sequence belongs to the MrnC RNase family. Homodimer. The cofactor is Mg(2+).

It is found in the cytoplasm. Involved in correct processing of both the 5' and 3' ends of 23S rRNA precursor. Processes 30S rRNA precursor transcript even in absence of ribonuclease 3 (Rnc); Rnc processes 30S rRNA into smaller rRNA precursors. This chain is Mini-ribonuclease 3, found in Thermoanaerobacter sp. (strain X514).